A 155-amino-acid chain; its full sequence is Small ribosomal subunit protein uS7c (155 aa).

The protein belongs to the universal ribosomal protein uS7 family. As to quaternary structure, part of the 30S ribosomal subunit.

The protein resides in the plastid. It localises to the chloroplast. Functionally, one of the primary rRNA binding proteins, it binds directly to 16S rRNA where it nucleates assembly of the head domain of the 30S subunit. The chain is Small ribosomal subunit protein uS7c (rps7) from Dioscorea bulbifera (Air potato).